The following is a 425-amino-acid chain: Enolase (425 aa).

(2R)-2-phosphoglycerate is bound at residue glutamine 164. Glutamate 208 functions as the Proton donor in the catalytic mechanism. The Mg(2+) site is built by aspartate 243, glutamate 286, and aspartate 312. The (2R)-2-phosphoglycerate site is built by lysine 337, arginine 366, serine 367, and lysine 388. The Proton acceptor role is filled by lysine 337.

Belongs to the enolase family. The cofactor is Mg(2+).

It is found in the cytoplasm. The protein resides in the secreted. It localises to the cell surface. It carries out the reaction (2R)-2-phosphoglycerate = phosphoenolpyruvate + H2O. It participates in carbohydrate degradation; glycolysis; pyruvate from D-glyceraldehyde 3-phosphate: step 4/5. Its function is as follows. Catalyzes the reversible conversion of 2-phosphoglycerate (2-PG) into phosphoenolpyruvate (PEP). It is essential for the degradation of carbohydrates via glycolysis. This chain is Enolase, found in Methanococcus aeolicus (strain ATCC BAA-1280 / DSM 17508 / OCM 812 / Nankai-3).